The primary structure comprises 221 residues: Iron-sulfur cluster repair protein YtfE (221 aa).

The protein belongs to the RIC family. YtfE subfamily. As to quaternary structure, homodimer.

The protein resides in the cytoplasm. Its function is as follows. Di-iron-containing protein involved in the repair of iron-sulfur clusters damaged by oxidative and nitrosative stress conditions. This Yersinia pseudotuberculosis serotype IB (strain PB1/+) protein is Iron-sulfur cluster repair protein YtfE.